Here is a 138-residue protein sequence, read N- to C-terminus: Putative thioredoxin-like protein 453L (138 aa).

The Thioredoxin domain occupies 3–138; it reads QQKYFEKPVY…FNNIVNYVMG (136 aa). Active-site nucleophile residues include Cys44 and Cys47. The cysteines at positions 44 and 47 are disulfide-linked.

Belongs to the thioredoxin family.

Functionally, participates in various redox reactions through the reversible oxidation of its active center dithiol to a disulfide and catalyzes dithiol-disulfide exchange reactions. The sequence is that of Putative thioredoxin-like protein 453L from Acheta domesticus (House cricket).